We begin with the raw amino-acid sequence, 440 residues long: Protein naked cuticle homolog 1 (440 aa).

Gly-2 carries N-myristoyl glycine lipidation. In terms of domain architecture, EF-hand spans 129–164 (EEDNRQEWTFTLYDFDNNGKVTREDITSLLHTIYEV). Positions 142, 144, 146, 148, and 153 each coordinate Ca(2+). Residues 192 to 204 (RWKNCTQTNTDTP) show a composition bias toward polar residues. 3 disordered regions span residues 192-221 (RWKN…KTSE), 272-379 (AAPA…QRPK), and 421-440 (RHEH…FYQS). The span at 211-221 (EKCIEDSKTSE) shows a compositional bias: basic and acidic residues. Low complexity predominate over residues 272-293 (AAPATEPAKPTHATRSSNQSRS). Basic residues predominate over residues 324-336 (RHTHALRSPKTHR). A compositionally biased stretch (pro residues) spans 352–362 (APPPPSVPNQT). Basic residues predominate over residues 422–440 (HEHHHHHEHHHHYHHFYQS).

This sequence belongs to the NKD family.

The protein localises to the cell membrane. It localises to the cytoplasm. Cell autonomous antagonist of the canonical Wnt signaling pathway. May activate a second Wnt signaling pathway that controls planar cell polarity. The sequence is that of Protein naked cuticle homolog 1 (nkd1) from Danio rerio (Zebrafish).